The following is a 517-amino-acid chain: Aldehyde dehydrogenase X, mitochondrial (517 aa).

A mitochondrion-targeting transit peptide spans Met1–Ala17. Lys51 carries the post-translational modification N6-acetyllysine. Lys52 bears the N6-acetyllysine; alternate mark. Lys52 is modified (N6-succinyllysine; alternate). Position 81 is an N6-succinyllysine (Lys81). Gly262 to Gly267 serves as a coordination point for NAD(+). Glu285 acts as the Proton acceptor in catalysis. Cys319 serves as the catalytic Nucleophile. An N6-acetyllysine; alternate mark is found at Lys364, Lys383, Lys399, Lys414, and Lys426. N6-succinyllysine; alternate is present on residues Lys364, Lys383, Lys399, Lys414, and Lys426. Residue Lys429 is modified to N6-acetyllysine.

Belongs to the aldehyde dehydrogenase family. In terms of assembly, homotetramer. As to expression, liver, testis and to a lesser extent in brain.

It is found in the mitochondrion matrix. It carries out the reaction an aldehyde + NAD(+) + H2O = a carboxylate + NADH + 2 H(+). It participates in alcohol metabolism; ethanol degradation; acetate from ethanol: step 2/2. Its function is as follows. ALDHs play a major role in the detoxification of alcohol-derived acetaldehyde. They are involved in the metabolism of corticosteroids, biogenic amines, neurotransmitters, and lipid peroxidation. This Homo sapiens (Human) protein is Aldehyde dehydrogenase X, mitochondrial (ALDH1B1).